The sequence spans 549 residues: Oxygen-dependent choline dehydrogenase (549 aa).

4–33 (DFVIIGSGSAGSAMAYRLSENGRYSVIVIE) is a binding site for FAD. Catalysis depends on H465, which acts as the Proton acceptor.

Belongs to the GMC oxidoreductase family. Requires FAD as cofactor.

The enzyme catalyses choline + A = betaine aldehyde + AH2. It catalyses the reaction betaine aldehyde + NAD(+) + H2O = glycine betaine + NADH + 2 H(+). It participates in amine and polyamine biosynthesis; betaine biosynthesis via choline pathway; betaine aldehyde from choline (cytochrome c reductase route): step 1/1. Involved in the biosynthesis of the osmoprotectant glycine betaine. Catalyzes the oxidation of choline to betaine aldehyde and betaine aldehyde to glycine betaine at the same rate. This is Oxygen-dependent choline dehydrogenase from Brucella suis biovar 1 (strain 1330).